The sequence spans 96 residues: ESAT-6-like protein EsxR (96 aa).

Belongs to the WXG100 family. ESAT-6 subfamily.

It localises to the secreted. This Mycobacterium bovis (strain ATCC BAA-935 / AF2122/97) protein is ESAT-6-like protein EsxR.